The primary structure comprises 538 residues: Chaperonin GroEL (538 aa).

Residues 29–32 (TLGP), 86–90 (DGTTT), Gly-413, 477–479 (NAA), and Asp-493 contribute to the ATP site.

This sequence belongs to the chaperonin (HSP60) family. As to quaternary structure, forms a cylinder of 14 subunits composed of two heptameric rings stacked back-to-back. Interacts with the co-chaperonin GroES.

It localises to the cytoplasm. The enzyme catalyses ATP + H2O + a folded polypeptide = ADP + phosphate + an unfolded polypeptide.. Its function is as follows. Together with its co-chaperonin GroES, plays an essential role in assisting protein folding. The GroEL-GroES system forms a nano-cage that allows encapsulation of the non-native substrate proteins and provides a physical environment optimized to promote and accelerate protein folding. The chain is Chaperonin GroEL from Scardovia inopinata (Bifidobacterium inopinatum).